Consider the following 245-residue polypeptide: Precorrin-2 C(20)-methyltransferase (245 aa).

The protein belongs to the precorrin methyltransferase family. As to quaternary structure, homodimer.

The catalysed reaction is precorrin-2 + S-adenosyl-L-methionine = precorrin-3A + S-adenosyl-L-homocysteine + H(+). It participates in cofactor biosynthesis; adenosylcobalamin biosynthesis; cob(II)yrinate a,c-diamide from precorrin-2 (aerobic route): step 1/10. Methylates precorrin-2 at the C-20 position to produce precorrin-3A. The protein is Precorrin-2 C(20)-methyltransferase (cobI) of Sinorhizobium sp.